A 1450-amino-acid polypeptide reads, in one-letter code: ABC transporter G family member 37 (1450 aa).

The ABC transporter 1 domain maps to 158-431 (GNALHILPNK…FEFMGFRCPA (274 aa)). Position 191 to 198 (191 to 198 (GPPGSGKT)) interacts with ATP. The region spanning 509-721 (ELLKATIDRE…AQNAISTNEF (213 aa)) is the ABC transmembrane type-2 1 domain. 6 helical membrane-spanning segments follow: residues 527 to 547 (FMYIFKAVNLTLMALIVMTTF), 559 to 579 (GMIYLGALYFALDTVMFNGFA), 614 to 634 (IPITFLEVGVYVFITYYVIGF), 646 to 666 (LLLLALNQMSSALFRFIAGIG), 670 to 690 (VVSHTFGPLSLLAFAALGGFI), and 756 to 776 (IGLGALLGYTLLFNLLYTVAL). Residues 852–1104 (ISFNDVRYSV…KLIEYFEGID (253 aa)) enclose the ABC transporter 2 domain. Position 897 to 904 (897 to 904 (GVSGAGKT)) interacts with ATP. An ABC transmembrane type-2 2 domain is found at 1177–1391 (TQCLACLWKQ…TLYGLVASQF (215 aa)). Transmembrane regions (helical) follow at residues 1198–1218 (AVRLLFTIVIALMFGTMFWNL), 1236–1256 (YAAVLYIGVQNSGSVQPVVVV), 1284–1304 (LPYIMVQTLIYGVLVYSMIGF), 1311–1331 (FLWYLFFMYFTLLYFTFYGMM), 1341–1361 (IAAIISSAFYNVWNLFSGYLI), 1372–1392 (WYCWICPVAWTLYGLVASQFG), and 1422–1442 (VVAVVHVVFAVTFAFLFSFAI).

This sequence belongs to the ABC transporter superfamily. ABCG family. PDR (TC 3.A.1.205) subfamily.

The protein resides in the membrane. Functionally, may be a general defense protein. In Oryza sativa subsp. japonica (Rice), this protein is ABC transporter G family member 37.